Consider the following 179-residue polypeptide: Large ribosomal subunit protein bL17 (179 aa).

Residues 123–161 (KEKDTKKKDDSKKSDDKKTSKKEAGFKSSKGESEHKKNT) are compositionally biased toward basic and acidic residues. A disordered region spans residues 123–179 (KEKDTKKKDDSKKSDDKKTSKKEAGFKSSKGESEHKKNTDQVVDSSSNRRYNRVKGS). Residues 162–171 (DQVVDSSSNR) show a composition bias toward polar residues.

Belongs to the bacterial ribosomal protein bL17 family. In terms of assembly, part of the 50S ribosomal subunit. Contacts protein L32.

This is Large ribosomal subunit protein bL17 from Treponema denticola (strain ATCC 35405 / DSM 14222 / CIP 103919 / JCM 8153 / KCTC 15104).